A 1415-amino-acid chain; its full sequence is DNA-directed RNA polymerase subunit beta' (1415 aa).

Cys-70, Cys-72, Cys-85, and Cys-88 together coordinate Zn(2+). Mg(2+) contacts are provided by Asp-461, Asp-463, and Asp-465. Zn(2+)-binding residues include Cys-820, Cys-894, Cys-901, and Cys-904.

It belongs to the RNA polymerase beta' chain family. The RNAP catalytic core consists of 2 alpha, 1 beta, 1 beta' and 1 omega subunit. When a sigma factor is associated with the core the holoenzyme is formed, which can initiate transcription. Mg(2+) serves as cofactor. The cofactor is Zn(2+).

It catalyses the reaction RNA(n) + a ribonucleoside 5'-triphosphate = RNA(n+1) + diphosphate. In terms of biological role, DNA-dependent RNA polymerase catalyzes the transcription of DNA into RNA using the four ribonucleoside triphosphates as substrates. The chain is DNA-directed RNA polymerase subunit beta' from Cupriavidus necator (strain ATCC 17699 / DSM 428 / KCTC 22496 / NCIMB 10442 / H16 / Stanier 337) (Ralstonia eutropha).